A 434-amino-acid chain; its full sequence is Ribosomal protein uS12 methylthiotransferase RimO (434 aa).

Positions 9-125 (PAIFLLSLGC…VLAAIGAKYR (117 aa)) constitute an MTTase N-terminal domain. Residues Cys18, Cys54, Cys88, Cys149, Cys153, and Cys156 each coordinate [4Fe-4S] cluster. The Radical SAM core domain occupies 135–364 (LTPPHYAFLK…MELQEGISAS (230 aa)). One can recognise a TRAM domain in the interval 367 to 434 (RKLEGQTLKV…AYELFGRISG (68 aa)).

This sequence belongs to the methylthiotransferase family. RimO subfamily. It depends on [4Fe-4S] cluster as a cofactor.

The protein resides in the cytoplasm. The enzyme catalyses L-aspartate(89)-[ribosomal protein uS12]-hydrogen + (sulfur carrier)-SH + AH2 + 2 S-adenosyl-L-methionine = 3-methylsulfanyl-L-aspartate(89)-[ribosomal protein uS12]-hydrogen + (sulfur carrier)-H + 5'-deoxyadenosine + L-methionine + A + S-adenosyl-L-homocysteine + 2 H(+). In terms of biological role, catalyzes the methylthiolation of an aspartic acid residue of ribosomal protein uS12. The protein is Ribosomal protein uS12 methylthiotransferase RimO of Chlorobaculum tepidum (strain ATCC 49652 / DSM 12025 / NBRC 103806 / TLS) (Chlorobium tepidum).